The primary structure comprises 150 residues: Flagellar assembly factor FliW (150 aa).

It belongs to the FliW family. As to quaternary structure, interacts with translational regulator CsrA and flagellin(s).

The protein localises to the cytoplasm. In terms of biological role, acts as an anti-CsrA protein, binds CsrA and prevents it from repressing translation of its target genes, one of which is flagellin. Binds to flagellin and participates in the assembly of the flagellum. In Caldanaerobacter subterraneus subsp. tengcongensis (strain DSM 15242 / JCM 11007 / NBRC 100824 / MB4) (Thermoanaerobacter tengcongensis), this protein is Flagellar assembly factor FliW.